Here is a 99-residue protein sequence, read N- to C-terminus: Large ribosomal subunit protein eL21 (99 aa).

It belongs to the eukaryotic ribosomal protein eL21 family.

The chain is Large ribosomal subunit protein eL21 from Pyrobaculum calidifontis (strain DSM 21063 / JCM 11548 / VA1).